The following is a 347-amino-acid chain: Protein RecA (347 aa).

Residue 67–74 (GPESSGKT) coordinates ATP.

This sequence belongs to the RecA family.

Its subcellular location is the cytoplasm. Its function is as follows. Can catalyze the hydrolysis of ATP in the presence of single-stranded DNA, the ATP-dependent uptake of single-stranded DNA by duplex DNA, and the ATP-dependent hybridization of homologous single-stranded DNAs. It interacts with LexA causing its activation and leading to its autocatalytic cleavage. This chain is Protein RecA, found in Helicobacter pylori (strain Shi470).